Consider the following 528-residue polypeptide: Gamma-taxilin (528 aa).

Residues 1 to 10 are compositionally biased toward basic and acidic residues; that stretch reads MATRVEEAAR. The segment at 1 to 36 is disordered; it reads MATRVEEAARGRGGGAEEATEAGRGGRRRSPRQKFE. Residues Arg12 and Arg24 each carry the omega-N-methylarginine modification. A phosphoserine mark is found at Ser79, Ser86, Ser97, and Ser105. The segment at 102–130 is disordered; the sequence is TQESREEIPGGEARTDPPDGQQDSECNRN. The segment covering 104 to 118 has biased composition (basic and acidic residues); it reads ESREEIPGGEARTDP. Residues 153–464 adopt a coiled-coil conformation; the sequence is EEKLAALCKK…LKEQVSIKAA (312 aa). Position 283 is a phosphotyrosine (Tyr283). The interval 486–528 is disordered; the sequence is HKELNTSSKRALGAHLEAEPKSQRSAVQKPPSTGSAPAIESVD. The segment covering 508-520 has biased composition (polar residues); sequence QRSAVQKPPSTGS. Ser517 is subject to Phosphoserine.

Belongs to the taxilin family. Binds to the C-terminal coiled coil region of syntaxin family members STX1A, STX3A and STX4A. Forms a heterodimer with ATF4 in osteoblasts. Ubiquitously expressed. Expressed at high level in heart and skeletal muscle. Expressed in brain, placenta, lung, liver, kidney and pancreas.

Its subcellular location is the nucleus membrane. It is found in the cytoplasm. The protein localises to the cytosol. In terms of biological role, may be involved in intracellular vesicle traffic. Inhibits ATF4-mediated transcription, possibly by dimerizing with ATF4 to form inactive dimers that cannot bind DNA. May be involved in regulating bone mass density through an ATF4-dependent pathway. May be involved in cell cycle progression. The polypeptide is Gamma-taxilin (TXLNG) (Homo sapiens (Human)).